Here is a 423-residue protein sequence, read N- to C-terminus: Putative protein phosphatase 2C 50 (423 aa).

A PPM-type phosphatase domain is found at 52 to 380 (IFAFPFPTGT…DNMAAVVVPL (329 aa)). Residues aspartate 74, glycine 75, aspartate 320, and aspartate 371 each contribute to the Mn(2+) site.

This sequence belongs to the PP2C family. It depends on Mg(2+) as a cofactor. The cofactor is Mn(2+).

It carries out the reaction O-phospho-L-seryl-[protein] + H2O = L-seryl-[protein] + phosphate. It catalyses the reaction O-phospho-L-threonyl-[protein] + H2O = L-threonyl-[protein] + phosphate. This chain is Putative protein phosphatase 2C 50, found in Arabidopsis thaliana (Mouse-ear cress).